We begin with the raw amino-acid sequence, 370 residues long: MKRGFSDSPSSSAPPPSSRFKSNPEGDSQFLEDETTKNFARKVADHYSRRTNQTLEEREASPIIHLKKLNNWIKSVLIQLYARPDDAVLDLACGKGGDLIKWDKARIGYYVGIDIAEGSIEDCRTRYNGDADHHQRRKKFSFPSRLLCGDCFEVELDKILEEDAPFDICSCQFAMHYSWTTEARARRALANVSALLRPGGVFIGTMPDANVIIKKLREAEGLEIGNSVYWIRFGEEYSQKKFKSSSPFGIEYVFHLEDAVDCPEWIVPFNVFKSLAEEYDLELVFVKNSHEFVHEYMKKPEFVELMRRLGALGDGSNDQSTLSADEWEAAYLYLSFVLRKRGESDGARRSGRRKNGKMNLSKDDVLYIDS.

Residues 1–11 show a composition bias toward low complexity; the sequence is MKRGFSDSPSS. The interval 1-34 is disordered; sequence MKRGFSDSPSSSAPPPSSRFKSNPEGDSQFLEDE. Residues 61-341 enclose the mRNA cap 0 methyltransferase domain; it reads SPIIHLKKLN…LYLSFVLRKR (281 aa). 70–71 contacts mRNA; sequence NN. S-adenosyl-L-methionine-binding positions include Lys74, Ala92, Asp114, 150–151, and 172–174; these read DC and QFA.

This sequence belongs to the class I-like SAM-binding methyltransferase superfamily. mRNA cap 0 methyltransferase family.

Its subcellular location is the nucleus. It catalyses the reaction a 5'-end (5'-triphosphoguanosine)-ribonucleoside in mRNA + S-adenosyl-L-methionine = a 5'-end (N(7)-methyl 5'-triphosphoguanosine)-ribonucleoside in mRNA + S-adenosyl-L-homocysteine. In terms of biological role, mRNA-capping methyltransferase that methylates the N7 position of the added guanosine to the 5'-cap structure of mRNAs. Binds RNA containing 5'-terminal GpppC. The sequence is that of mRNA cap guanine-N(7) methyltransferase 1 from Arabidopsis thaliana (Mouse-ear cress).